Reading from the N-terminus, the 469-residue chain is Trigger factor (469 aa).

The PPIase FKBP-type domain occupies Gly166–Pro245. Residues Gly430–Phe469 are disordered.

Belongs to the FKBP-type PPIase family. Tig subfamily.

It localises to the cytoplasm. The catalysed reaction is [protein]-peptidylproline (omega=180) = [protein]-peptidylproline (omega=0). Its function is as follows. Involved in protein export. Acts as a chaperone by maintaining the newly synthesized protein in an open conformation. Functions as a peptidyl-prolyl cis-trans isomerase. In Arthrobacter sp. (strain FB24), this protein is Trigger factor.